The following is a 454-amino-acid chain: UPF0210 protein Blon_2054/BLIJ_2131 (454 aa).

The protein belongs to the UPF0210 family. As to quaternary structure, homodimer.

The chain is UPF0210 protein Blon_2054/BLIJ_2131 from Bifidobacterium longum subsp. infantis (strain ATCC 15697 / DSM 20088 / JCM 1222 / NCTC 11817 / S12).